The chain runs to 170 residues: Protein GrpE (170 aa).

Positions 1-29 (MSEEIKNEEIVEEVEATEEVVETPEKSEL) are disordered. Positions 10–22 (IVEEVEATEEVVE) are enriched in acidic residues.

It belongs to the GrpE family. In terms of assembly, homodimer.

The protein localises to the cytoplasm. Participates actively in the response to hyperosmotic and heat shock by preventing the aggregation of stress-denatured proteins, in association with DnaK and GrpE. It is the nucleotide exchange factor for DnaK and may function as a thermosensor. Unfolded proteins bind initially to DnaJ; upon interaction with the DnaJ-bound protein, DnaK hydrolyzes its bound ATP, resulting in the formation of a stable complex. GrpE releases ADP from DnaK; ATP binding to DnaK triggers the release of the substrate protein, thus completing the reaction cycle. Several rounds of ATP-dependent interactions between DnaJ, DnaK and GrpE are required for fully efficient folding. The protein is Protein GrpE of Streptococcus suis (strain 98HAH33).